A 357-amino-acid polypeptide reads, in one-letter code: Mating-type protein MAT-1 (357 aa).

Positions 53–108 (RAKRPLNAFMAFRTYYLKLFPDTQQKNASGFLTQLWGGDPHRNKWALIAKVYSFLR) form a DNA-binding region, alpha box.

The protein belongs to the MATALPHA1 family.

Its subcellular location is the nucleus. In terms of biological role, mating type proteins are sequence specific DNA-binding proteins that act as master switches in fungal differentiation by controlling gene expression in a cell type-specific fashion. Transcriptional activator that induces the transcription of alpha-specific genes. The polypeptide is Mating-type protein MAT-1 (MAT1) (Fusarium oxysporum (Fusarium vascular wilt)).